The sequence spans 173 residues: Skp-like protein (173 aa).

Residues 1–19 form the signal peptide; it reads MKKFLLLSLMSLASSTVFA.

Belongs to the Skp family.

The chain is Skp-like protein from Chlamydia muridarum (strain MoPn / Nigg).